Consider the following 89-residue polypeptide: Small ribosomal subunit protein uS15 (89 aa).

This sequence belongs to the universal ribosomal protein uS15 family. As to quaternary structure, part of the 30S ribosomal subunit. Forms a bridge to the 50S subunit in the 70S ribosome, contacting the 23S rRNA.

Its function is as follows. One of the primary rRNA binding proteins, it binds directly to 16S rRNA where it helps nucleate assembly of the platform of the 30S subunit by binding and bridging several RNA helices of the 16S rRNA. Functionally, forms an intersubunit bridge (bridge B4) with the 23S rRNA of the 50S subunit in the ribosome. The chain is Small ribosomal subunit protein uS15 from Dinoroseobacter shibae (strain DSM 16493 / NCIMB 14021 / DFL 12).